Reading from the N-terminus, the 106-residue chain is UPF0473 protein LCABL_08490 (106 aa).

The protein belongs to the UPF0473 family.

The polypeptide is UPF0473 protein LCABL_08490 (Lacticaseibacillus casei (strain BL23) (Lactobacillus casei)).